A 204-amino-acid chain; its full sequence is Large ribosomal subunit protein eL15 (204 aa).

This sequence belongs to the eukaryotic ribosomal protein eL15 family. In terms of assembly, component of the large ribosomal subunit.

The protein localises to the cytoplasm. Its function is as follows. Component of the large ribosomal subunit. The ribosome is a large ribonucleoprotein complex responsible for the synthesis of proteins in the cell. The sequence is that of Large ribosomal subunit protein eL15 (rpl15) from Hypophthalmichthys nobilis (Bighead carp).